The following is a 549-amino-acid chain: Arginine--tRNA ligase (549 aa).

Positions 132–142 (ANPTGPLHIGH) match the 'HIGH' region motif.

The protein belongs to the class-I aminoacyl-tRNA synthetase family. In terms of assembly, monomer.

It localises to the cytoplasm. The catalysed reaction is tRNA(Arg) + L-arginine + ATP = L-arginyl-tRNA(Arg) + AMP + diphosphate. The protein is Arginine--tRNA ligase of Paenarthrobacter aurescens (strain TC1).